The chain runs to 475 residues: Ribulose bisphosphate carboxylase large chain (475 aa).

Positions 1 to 2 are excised as a propeptide; sequence MS. Pro3 is subject to N-acetylproline. Lys14 is modified (N6,N6,N6-trimethyllysine). Residues Asn123 and Thr173 each contribute to the substrate site. Lys175 serves as the catalytic Proton acceptor. Lys177 contributes to the substrate binding site. Mg(2+)-binding residues include Lys201, Asp203, and Glu204. Position 201 is an N6-carboxylysine (Lys201). His294 acts as the Proton acceptor in catalysis. Substrate contacts are provided by Arg295, His327, and Ser379.

This sequence belongs to the RuBisCO large chain family. Type I subfamily. As to quaternary structure, heterohexadecamer of 8 large chains and 8 small chains; disulfide-linked. The disulfide link is formed within the large subunit homodimers. Mg(2+) is required as a cofactor. In terms of processing, the disulfide bond which can form in the large chain dimeric partners within the hexadecamer appears to be associated with oxidative stress and protein turnover.

The protein localises to the plastid. It is found in the chloroplast. The catalysed reaction is 2 (2R)-3-phosphoglycerate + 2 H(+) = D-ribulose 1,5-bisphosphate + CO2 + H2O. It carries out the reaction D-ribulose 1,5-bisphosphate + O2 = 2-phosphoglycolate + (2R)-3-phosphoglycerate + 2 H(+). RuBisCO catalyzes two reactions: the carboxylation of D-ribulose 1,5-bisphosphate, the primary event in carbon dioxide fixation, as well as the oxidative fragmentation of the pentose substrate in the photorespiration process. Both reactions occur simultaneously and in competition at the same active site. This Fagopyrum esculentum subsp. ancestrale (Wild buckwheat) protein is Ribulose bisphosphate carboxylase large chain.